The primary structure comprises 311 residues: Glycerol-3-phosphate dehydrogenase [NAD(P)+] (311 aa).

4 residues coordinate NADPH: W12, R31, R32, and K96. 3 residues coordinate sn-glycerol 3-phosphate: K96, G124, and S126. A128 serves as a coordination point for NADPH. Residues K178, D231, S241, R242, and N243 each contribute to the sn-glycerol 3-phosphate site. K178 functions as the Proton acceptor in the catalytic mechanism. R242 provides a ligand contact to NADPH. 2 residues coordinate NADPH: V266 and E268.

The protein belongs to the NAD-dependent glycerol-3-phosphate dehydrogenase family.

It localises to the cytoplasm. It catalyses the reaction sn-glycerol 3-phosphate + NAD(+) = dihydroxyacetone phosphate + NADH + H(+). The catalysed reaction is sn-glycerol 3-phosphate + NADP(+) = dihydroxyacetone phosphate + NADPH + H(+). Its pathway is membrane lipid metabolism; glycerophospholipid metabolism. Functionally, catalyzes the reduction of the glycolytic intermediate dihydroxyacetone phosphate (DHAP) to sn-glycerol 3-phosphate (G3P), the key precursor for phospholipid synthesis. This is Glycerol-3-phosphate dehydrogenase [NAD(P)+] from Helicobacter hepaticus (strain ATCC 51449 / 3B1).